Consider the following 407-residue polypeptide: Lysine racemase (407 aa).

Residues 1–18 (MSLGIRYLALLPLFVITA) form the signal peptide. Cys-19 is lipidated: N-palmitoyl cysteine. Cys-19 carries S-diacylglycerol cysteine lipidation. Cys-70 and Cys-96 are disulfide-bonded. Residue Lys-74 is the Proton acceptor of the active site. Lys-74 is modified (N6-(pyridoxal phosphate)lysine). Position 173 (Arg-173) interacts with substrate. Tyr-299 functions as the Proton acceptor in the catalytic mechanism. Met-347 provides a ligand contact to substrate.

The protein belongs to the alanine racemase family. Bsr subfamily. Forms a head-to-tail homodimer in the structure. Requires pyridoxal 5'-phosphate as cofactor.

It localises to the cell membrane. Its subcellular location is the periplasm. It carries out the reaction L-lysine = D-lysine. It catalyses the reaction L-arginine = D-arginine. The racemization activity of Lyr is completely inhibited by hydroxylamine. Its function is as follows. Amino-acid racemase that catalyzes the interconversion of L-lysine and D-lysine. To a lesser extent, is also able to interconvert arginine enantiomers. Cannot use methionine, asparagine, alanine, leucine, glutamine, phenylalanine and histidine as substrates. This Proteus mirabilis protein is Lysine racemase.